Here is a 452-residue protein sequence, read N- to C-terminus: Protein tipE (452 aa).

At 1-20 (MGDEQDKRTGKEKLLFYTTA) the chain is on the cytoplasmic side. Residues 21–41 (FFILLGTFSLFAFLFLVPFVI) traverse the membrane as a helical segment. Residues 42–274 (EPAFTTIFMQ…ISDLDYWQNT (233 aa)) are Extracellular-facing. 5 N-linked (GlcNAc...) asparagine glycosylation sites follow: asparagine 72, asparagine 102, asparagine 108, asparagine 212, and asparagine 237. The helical transmembrane segment at 275 to 295 (LNLVYSMAIPIPSFIISVIYL) threads the bilayer. The Cytoplasmic segment spans residues 296 to 452 (TYAYFKIYNE…STPPGPTAAV (157 aa)). Residues 423–444 (AISTSNSVQGNLSKTMTTSIST) show a composition bias toward polar residues. The segment at 423–452 (AISTSNSVQGNLSKTMTTSISTPPGPTAAV) is disordered.

As to expression, preferentially expressed in the central nervous system of developing embryos, weaker expression is seen in the peripheral nervous system. In pupae and adults, expression is seen predominantly in heads, body and legs.

It is found in the membrane. Enhances para sodium channel function. Required during pupal development to rescue adult paralysis and also protects adult flies against heat-induced lethality. In Drosophila melanogaster (Fruit fly), this protein is Protein tipE (tipE).